The chain runs to 476 residues: MAQYSAQFPHAKVLVLGDVMLDRYWFGATNRISPEAPVPVVRVKKHEERAGGAANVAMNIASLNVPVRLLGLTGDDEAGNALTGLLEKQKICCDFVKLSSHPTITKLRILSRHQQLLRLDFEENFNNVHSDNLLTKLESAVKNVGALILSDYGKGTLNDVQHMIRIARQAKVPVLIDPKGTDFERYRGATLLTPNMSEFEAVAGVCQSDEDIVEKGLKMIADYDLTALLITRSEKGMTLLRPNQPAFHLPTEAKEVYDVTGAGDTVISVLATALADGRTVEEACYLANVAAGIVVGKLGTSAVSTVELENAIHGRTVSGFGIMTENELKNAVKLAKERGEKIVMTNGCFDILHPGHVSYLENARKLGDRLIVAVNTDESVKRLKGETRPINDLASRMAVLAGLSSVDWLVAFDEDTPQRLIGEILPDLLVKGGDYKPEEIAGSKEVWANGGDVSVLNFENGCSTSNVIKKIRDLKD.

Residues 1-319 (MAQYSAQFPH…NAIHGRTVSG (319 aa)) form a ribokinase region. 195-198 (NMSE) contacts ATP. Asp264 is an active-site residue. The segment at 344 to 476 (MTNGCFDILH…VIKKIRDLKD (133 aa)) is cytidylyltransferase.

In the N-terminal section; belongs to the carbohydrate kinase PfkB family. The protein in the C-terminal section; belongs to the cytidylyltransferase family. As to quaternary structure, homodimer.

It carries out the reaction D-glycero-beta-D-manno-heptose 7-phosphate + ATP = D-glycero-beta-D-manno-heptose 1,7-bisphosphate + ADP + H(+). The enzyme catalyses D-glycero-beta-D-manno-heptose 1-phosphate + ATP + H(+) = ADP-D-glycero-beta-D-manno-heptose + diphosphate. Its pathway is nucleotide-sugar biosynthesis; ADP-L-glycero-beta-D-manno-heptose biosynthesis; ADP-L-glycero-beta-D-manno-heptose from D-glycero-beta-D-manno-heptose 7-phosphate: step 1/4. It functions in the pathway nucleotide-sugar biosynthesis; ADP-L-glycero-beta-D-manno-heptose biosynthesis; ADP-L-glycero-beta-D-manno-heptose from D-glycero-beta-D-manno-heptose 7-phosphate: step 3/4. Its function is as follows. Catalyzes the phosphorylation of D-glycero-D-manno-heptose 7-phosphate at the C-1 position to selectively form D-glycero-beta-D-manno-heptose-1,7-bisphosphate. In terms of biological role, catalyzes the ADP transfer from ATP to D-glycero-beta-D-manno-heptose 1-phosphate, yielding ADP-D-glycero-beta-D-manno-heptose. The sequence is that of Bifunctional protein HldE from Actinobacillus succinogenes (strain ATCC 55618 / DSM 22257 / CCUG 43843 / 130Z).